Here is a 266-residue protein sequence, read N- to C-terminus: MPQPVPTANRLLDLFSLKGKVVVVTGASGPRGMGIEAARGCAEMGADLAITYSSRKEGAEKNAEELTKEYGVKVKVYKVNQSDYNDVERFVNQVVSDFGKIDAFIANAGATANSGVVDGSASDWDHVIQVDLSGTAYCAKAVGAHFKKQGHGSLVITASMSGHVANYPQEQTSYNVAKAGCIHLARSLANEWRDFARVNSISPGYIDTGLSDFIDEKTQELWRSMIPMGRNGDAKELKGAYVYLVSDASSYTTGADIVIDGGYTTR.

NADP(+) is bound by residues serine 53, asparagine 107, and lysine 140. Serine 159 serves as the catalytic Proton donor. Tyrosine 174, lysine 178, isoleucine 206, and threonine 208 together coordinate NADP(+). Catalysis depends on tyrosine 174, which acts as the Proton acceptor. The active-site Lowers pKa of active site Tyr is lysine 178.

It belongs to the short-chain dehydrogenases/reductases (SDR) family. In terms of assembly, homotetramer.

The catalysed reaction is D-mannitol + NADP(+) = D-fructose + NADPH + H(+). In terms of biological role, D-mannitol 2-dehydrogenase which is not necessary for D-mannitol catabolism. D-mannitol metabolism occurs via at least two different routes involving mannitol dehydrogenase (MDH) or mannitol 1-phosphate dehydrogenase, and the exact physiological role of mannitol dehydrogenases remains unclear. In Hypocrea jecorina (strain ATCC 56765 / BCRC 32924 / NRRL 11460 / Rut C-30) (Trichoderma reesei), this protein is NADP-dependent mannitol dehydrogenase.